Here is a 113-residue protein sequence, read N- to C-terminus: Nucleoid-associated protein Synpcc7942_0464 (113 aa).

Belongs to the YbaB/EbfC family. In terms of assembly, homodimer.

It localises to the cytoplasm. It is found in the nucleoid. Binds to DNA and alters its conformation. May be involved in regulation of gene expression, nucleoid organization and DNA protection. This chain is Nucleoid-associated protein Synpcc7942_0464, found in Synechococcus elongatus (strain ATCC 33912 / PCC 7942 / FACHB-805) (Anacystis nidulans R2).